Consider the following 134-residue polypeptide: Prefoldin subunit 4 (134 aa).

N-acetylalanine is present on Ala2. The residue at position 125 (Ser125) is a Phosphoserine.

Belongs to the prefoldin subunit beta family. In terms of assembly, heterohexamer of two PFD-alpha type and four PFD-beta type subunits. Interacts with URI1; the interaction is phosphorylation-dependent and occurs in a growth-dependent manner.

Its subcellular location is the nucleus. The protein localises to the cytoplasm. It localises to the mitochondrion. Functionally, binds specifically to cytosolic chaperonin (c-CPN) and transfers target proteins to it. Binds to nascent polypeptide chain and promotes folding in an environment in which there are many competing pathways for nonnative proteins. The chain is Prefoldin subunit 4 (PFDN4) from Bos taurus (Bovine).